We begin with the raw amino-acid sequence, 79 residues long: Sigma-O factor regulatory protein RsoA (79 aa).

Its function is as follows. Together with RNA polymerase sigma factor SigO, positively regulates the expression of at least three operons, including oxdC-yvrL, sigO-rsoA and yvrJ. Required for the acid stress-dependent induction of the oxalate decarboxylase oxdC. The chain is Sigma-O factor regulatory protein RsoA (rsoA) from Bacillus subtilis (strain 168).